Consider the following 245-residue polypeptide: Transmembrane protein 69 (245 aa).

5 helical membrane passes run 97–117 (ALYI…LMVI), 122–142 (IPVL…FLGG), 159–179 (YINL…ILFS), 185–205 (AIVT…FLLP), and 216–236 (IVST…ENIY).

The protein resides in the membrane. The sequence is that of Transmembrane protein 69 (Tmem69) from Mus musculus (Mouse).